The primary structure comprises 372 residues: N-acetylneuraminate epimerase 1 (372 aa).

The first 25 residues, 1–25 (MITMKVKNFIYLPFCLFIGTSVAGA), serve as a signal peptide directing secretion. Kelch repeat units follow at residues 44-88 (KIYI…TIID), 90-141 (KIYV…FIHN), 143-177 (HAVS…KVNR), 178-223 (DYFS…IFAE), 226-269 (IYIL…VSGA), 291-340 (EKYS…PWQG), and 342-371 (MLIL…IKIV). Glutamate 232 functions as the Proton acceptor in the catalytic mechanism.

This sequence belongs to the NanM family. Homodimer.

Its subcellular location is the periplasm. It carries out the reaction N-acetyl-alpha-neuraminate = N-acetyl-beta-neuraminate. Functionally, converts alpha-N-acetylneuranimic acid (Neu5Ac) to the beta-anomer, accelerating the equilibrium between the alpha- and beta-anomers. Probably facilitates sialidase-negative bacteria to compete successfully for limited amounts of extracellular Neu5Ac, which is likely taken up in the beta-anomer. In addition, the rapid removal of sialic acid from solution might be advantageous to the bacterium to damp down host responses. The protein is N-acetylneuraminate epimerase 1 of Escherichia coli O6:H1 (strain CFT073 / ATCC 700928 / UPEC).